Consider the following 355-residue polypeptide: uncharacterized protein (355 aa).

A signal peptide spans 1-27 (MESPIRTARRTLPLLIGATCLVLALTG). Cysteine 28 is lipidated: N-palmitoyl cysteine. The S-diacylglycerol cysteine moiety is linked to residue cysteine 28. The disordered stretch occupies residues 33–53 (GPAQARPTPSASTSPKQAPAL). Residues 39–48 (PTPSASTSPK) show a composition bias toward polar residues.

The protein localises to the cell membrane. This is an uncharacterized protein from Streptomyces coelicolor (strain ATCC BAA-471 / A3(2) / M145).